The following is a 533-amino-acid chain: Probable lipid II flippase MurJ (533 aa).

A run of 13 helical transmembrane segments spans residues 25-45 (ETLM…YAAF), 90-110 (VLFS…PLLV), 131-151 (LAAV…MSGM), 158-178 (FFAA…ALFY), 192-212 (YLSW…YIGV), 233-253 (LLLL…NLVI), 274-294 (IYQL…LPEL), 316-336 (FVLF…DDII), 350-370 (TTLV…FVLI), 389-409 (YTAI…PVLA), 412-432 (GIAL…FVTL), 449-469 (AMLL…SHRW), and 484-504 (GVLG…AFLI).

The protein belongs to the MurJ/MviN family.

It localises to the cell inner membrane. It participates in cell wall biogenesis; peptidoglycan biosynthesis. In terms of biological role, involved in peptidoglycan biosynthesis. Transports lipid-linked peptidoglycan precursors from the inner to the outer leaflet of the cytoplasmic membrane. The sequence is that of Probable lipid II flippase MurJ from Rhizobium tropici.